The primary structure comprises 91 residues: Small ribosomal subunit protein uS17 (91 aa).

It belongs to the universal ribosomal protein uS17 family. As to quaternary structure, part of the 30S ribosomal subunit.

One of the primary rRNA binding proteins, it binds specifically to the 5'-end of 16S ribosomal RNA. The polypeptide is Small ribosomal subunit protein uS17 (Salinispora tropica (strain ATCC BAA-916 / DSM 44818 / JCM 13857 / NBRC 105044 / CNB-440)).